The sequence spans 102 residues: Large ribosomal subunit protein bL21 (102 aa).

This sequence belongs to the bacterial ribosomal protein bL21 family. In terms of assembly, part of the 50S ribosomal subunit. Contacts protein L20.

Its function is as follows. This protein binds to 23S rRNA in the presence of protein L20. The chain is Large ribosomal subunit protein bL21 from Trichlorobacter lovleyi (strain ATCC BAA-1151 / DSM 17278 / SZ) (Geobacter lovleyi).